The chain runs to 152 residues: Clitocypin-2 (152 aa).

It belongs to the protease inhibitor I48 family. In terms of assembly, homodimer. Expressed in all analyzed tissues, but expression was higher in the pileus and in the lower part of the stipe.

Binds and inhibits cysteine proteinases. Inhibits most strongly papain and cathepsin L, more weakly bromelain and cathepsin B while it is completely ineffective against cathepsin H. This Clitocybe nebularis (Clouded agaric) protein is Clitocypin-2 (clt2).